The primary structure comprises 113 residues: Small ribosomal subunit protein uS17 (113 aa).

It belongs to the universal ribosomal protein uS17 family. In terms of assembly, part of the 30S ribosomal subunit.

Its function is as follows. One of the primary rRNA binding proteins, it binds specifically to the 5'-end of 16S ribosomal RNA. The chain is Small ribosomal subunit protein uS17 from Nanoarchaeum equitans (strain Kin4-M).